Here is a 480-residue protein sequence, read N- to C-terminus: Ftsk domain-containing protein YdcQ (480 aa).

2 helical membrane-spanning segments follow: residues 25 to 45 and 71 to 91; these read VKLA…FLFW and SVLC…FLLF. The FtsK domain maps to 217 to 399; the sequence is MKHISWQFDK…LGLMSDTGYG (183 aa). 234-241 contacts ATP; sequence GGTGGGKT.

The protein localises to the cell membrane. The sequence is that of Ftsk domain-containing protein YdcQ (ydcQ) from Bacillus subtilis (strain 168).